Here is a 312-residue protein sequence, read N- to C-terminus: Uracil-DNA glycosylase (312 aa).

Positions 1 to 11 are enriched in basic and acidic residues; sequence MSSACDHETEA. A disordered region spans residues 1-61; it reads MSSACDHETE…PPKRRRPCGL (61 aa). The segment covering 22-33 has biased composition (polar residues); it reads EENGSNSSTPTS. Asp-155 functions as the Proton acceptor in the catalytic mechanism.

This sequence belongs to the uracil-DNA glycosylase (UDG) superfamily. UNG family.

The protein localises to the host nucleus. The enzyme catalyses Hydrolyzes single-stranded DNA or mismatched double-stranded DNA and polynucleotides, releasing free uracil.. In terms of biological role, excises uracil residues from the DNA which can arise as a result of misincorporation of dUMP residues by DNA polymerase or deamination of cytosines. Therefore may reduce deleterious uracil incorporation into the viral genome, particularly in terminally differentiated cells which lack DNA repair enzymes. The protein is Uracil-DNA glycosylase (61) of Equine herpesvirus 1 (strain V592) (EHV-1).